The sequence spans 310 residues: Ribosomal RNA small subunit methyltransferase H (310 aa).

S-adenosyl-L-methionine is bound by residues 32–34, Asp-52, Phe-79, Asp-100, and Gln-107; that span reads GGH.

The protein belongs to the methyltransferase superfamily. RsmH family.

It is found in the cytoplasm. It catalyses the reaction cytidine(1402) in 16S rRNA + S-adenosyl-L-methionine = N(4)-methylcytidine(1402) in 16S rRNA + S-adenosyl-L-homocysteine + H(+). Functionally, specifically methylates the N4 position of cytidine in position 1402 (C1402) of 16S rRNA. This Bacillus anthracis (strain A0248) protein is Ribosomal RNA small subunit methyltransferase H.